Here is a 430-residue protein sequence, read N- to C-terminus: Adenylosuccinate synthetase (430 aa).

GTP-binding positions include 12-18 (GDEGKGK) and 40-42 (GHT). Asp13 acts as the Proton acceptor in catalysis. The Mg(2+) site is built by Asp13 and Gly40. Residues 13–16 (DEGK), 38–41 (NAGH), Thr128, Arg142, Gln223, Thr238, and Arg302 each bind IMP. His41 (proton donor) is an active-site residue. 298-304 (TTTGRPR) lines the substrate pocket. GTP contacts are provided by residues Arg304, 330 to 332 (SID), and 412 to 414 (SVG).

The protein belongs to the adenylosuccinate synthetase family. As to quaternary structure, homodimer. It depends on Mg(2+) as a cofactor.

The protein resides in the cytoplasm. The catalysed reaction is IMP + L-aspartate + GTP = N(6)-(1,2-dicarboxyethyl)-AMP + GDP + phosphate + 2 H(+). Its pathway is purine metabolism; AMP biosynthesis via de novo pathway; AMP from IMP: step 1/2. Its function is as follows. Plays an important role in the de novo pathway of purine nucleotide biosynthesis. Catalyzes the first committed step in the biosynthesis of AMP from IMP. In Streptococcus pyogenes serotype M5 (strain Manfredo), this protein is Adenylosuccinate synthetase.